We begin with the raw amino-acid sequence, 93 residues long: Small ribosomal subunit protein uS19 (93 aa).

The interval 73 to 93 is disordered; that stretch reads EFSPTRTFRGHVKDDRKSKRR. Over residues 83–93 the composition is skewed to basic and acidic residues; it reads HVKDDRKSKRR.

The protein belongs to the universal ribosomal protein uS19 family.

Protein S19 forms a complex with S13 that binds strongly to the 16S ribosomal RNA. This is Small ribosomal subunit protein uS19 from Streptomyces avermitilis (strain ATCC 31267 / DSM 46492 / JCM 5070 / NBRC 14893 / NCIMB 12804 / NRRL 8165 / MA-4680).